The chain runs to 324 residues: PGR5-like protein 1A, chloroplastic (324 aa).

Residues 1 to 60 (MGSKMLFSLTSPRLFSAVSRKPSSSFSPSPPSPSSRTQWTQLSPGKSISLRRRVFLLPAK) constitute a chloroplast transit peptide. Positions 16-42 (SAVSRKPSSSFSPSPPSPSSRTQWTQL) are disordered. Over 61-198 (ATTEQSGPVG…KVYSDLAVDY (138 aa)) the chain is Stromal. An intrachain disulfide couples C82 to C183. Residues 199-219 (FKMLLLNVPATVVALGLFFFL) form a helical membrane-spanning segment. The Lumenal, thylakoid segment spans residues 220–236 (DDITGFEITYIMELPEP). The helical transmembrane segment at 237 to 257 (YSFIFTWFAAVPVIVYLALSI) threads the bilayer. Over 258–324 (TKLIIKDFLI…LITLPEGSQA (67 aa)) the chain is Stromal.

Belongs to the PGR5 family. As to quaternary structure, homodimer and heterodimer with PGR5. Interacts with PGR5, FD2, petC, psaD1, LFNR1 and LFNR2. Also interacts with a Fe-containing cofactor (FCC). Post-translationally, disulfide bonds; Cys-300 and Cys-303 are probably involved in the formation of disulfide bridges with 'Cys-11' and 'Cys-105' of PGR5 while Cys-272 and Cys-275 are probably involved in the binding of a Fe-containing cofactor (FCC).

It is found in the plastid. Its subcellular location is the chloroplast thylakoid membrane. Inhibited by antimycin A. Functionally, ferredoxin-plastoquinone reductase involved in cyclic electron flow (CEF) around photosystem I. The homodimer is probably not involved in CEF. The polypeptide is PGR5-like protein 1A, chloroplastic (PGRL1A) (Arabidopsis thaliana (Mouse-ear cress)).